Here is a 471-residue protein sequence, read N- to C-terminus: Pancreatic lipase-related protein 2 (471 aa).

A signal peptide spans 1 to 17 (MLPSWTIGLLLLATVRG). An intrachain disulfide couples cysteine 21 to cysteine 27. Residue asparagine 71 is glycosylated (N-linked (GlcNAc...) asparagine). Positions 93 to 105 (IHGFIDKGEDSWP) are required for galactolipase activity. Cysteine 109 and cysteine 120 are disulfide-bonded. The active-site Nucleophile is the serine 171. Catalysis depends on aspartate 195, which acts as the Charge relay system. Positions 206, 209, 211, and 214 each coordinate Ca(2+). A disulfide bond links cysteine 256 and cysteine 280. The required for galactolipase activity stretch occupies residues 257-279 (QKNTLSTIVDVDGIWEGIEDFAA). The active-site Charge relay system is the histidine 282. Cystine bridges form between cysteine 304-cysteine 317 and cysteine 320-cysteine 325. N-linked (GlcNAc...) asparagine glycosylation occurs at asparagine 355. One can recognise a PLAT domain in the interval 359–471 (WRYRVSVTLA…ENILQTLNPC (113 aa)). Residues cysteine 455 and cysteine 471 are joined by a disulfide bond.

This sequence belongs to the AB hydrolase superfamily. Lipase family.

Its subcellular location is the secreted. It is found in the zymogen granule membrane. The protein resides in the cell projection. The protein localises to the neuron projection. The enzyme catalyses a triacylglycerol + H2O = a diacylglycerol + a fatty acid + H(+). The catalysed reaction is a 1,2-diacyl-3-O-(beta-D-galactosyl)-sn-glycerol + 2 H2O = 3-beta-D-galactosyl-sn-glycerol + 2 a fatty acid + 2 H(+). It carries out the reaction 1,2,3-tri-(9Z-octadecenoyl)-glycerol + H2O = di-(9Z)-octadecenoylglycerol + (9Z)-octadecenoate + H(+). It catalyses the reaction di-(9Z)-octadecenoylglycerol + H2O = (9Z-octadecenoyl)-glycerol + (9Z)-octadecenoate + H(+). The enzyme catalyses (9Z-octadecenoyl)-glycerol + H2O = glycerol + (9Z)-octadecenoate + H(+). The catalysed reaction is 1-(9Z-octadecenoyl)-glycerol + H2O = glycerol + (9Z)-octadecenoate + H(+). It carries out the reaction 1,2,3-tripropanoylglycerol + H2O = dipropanoylglycerol + propanoate + H(+). It catalyses the reaction 1,2,3-tributanoylglycerol + H2O = dibutanoylglycerol + butanoate + H(+). The enzyme catalyses 1,2,3-trioctanoylglycerol + H2O = dioctanoylglycerol + octanoate + H(+). The catalysed reaction is 1,2-didecanoylglycerol + H2O = decanoylglycerol + decanoate + H(+). It carries out the reaction long chain 1,2-diacyl-3-O-beta-D-galactosyl-sn-glycerol + H2O = long chain acyl-3-O-beta-D-galactosyl-sn-glycerol + a fatty acid + H(+). It catalyses the reaction 1,2-dioctanoyl-3-O-beta-D-galactosyl-sn-glycerol + H2O = octanoyl-3-(beta-D-galactosyl)-sn-glycerol + octanoate + H(+). The enzyme catalyses 1,2-didodecanoyl-3-beta-D-galactosyl-sn-glycerol + H2O = dodecanoyl-3-beta-D-galactosyl-sn-glycerol + dodecanoate + H(+). The catalysed reaction is 1-beta-D-galactosyl-2,3-didodecanoyl-sn-glycerol + H2O = 1-beta-D-galactosyl-dodecanoyl-sn-glycerol + dodecanoate + H(+). It carries out the reaction a 1,2-diacyl-3-O-[alpha-D-galactosyl-(1-&gt;6)-beta-D-galactosyl]-sn-glycerol + H2O = acyl-3-O-[alpha-D-galactosyl-(1-&gt;6)-beta-D-galactosyl]-sn-glycerol + a fatty acid + H(+). It catalyses the reaction long chain 1,2-diacyl-3-O-[alpha-D-galactosyl-(1-&gt;6)-beta-D-galactosyl]-sn-glycerol + H2O = long chain acyl-3-O-[alpha-D-galactosyl-(1-&gt;6)-beta-D-galactosyl]-sn-glycerol + a fatty acid + H(+). The enzyme catalyses 1,2-dioctanoyl-3-O-[alpha-D-galactosyl-(1-&gt;6)-beta-D-galactosyl]-sn-glycerol + H2O = octanoyl-3-O-[alpha-D-galactosyl-(1-&gt;6)-beta-D-galactosyl]-sn-glycerol + octanoate + H(+). The catalysed reaction is 1,2-didodecanoyl-3-O-[alpha-D-galactosyl-(1-&gt;6)-beta-D-galactosyl]-sn-glycerol + H2O = dodecanoyl-3-O-[alpha-D-galactosyl-(1-&gt;6)-beta-D-galactosyl]-sn-glycerol + dodecanoate + H(+). It carries out the reaction a 1,2-diacyl-sn-glycero-3-phosphocholine + H2O = a monoacyl-sn-glycero-3-phosphocholine + a fatty acid + H(+). It participates in glycerolipid metabolism; triacylglycerol degradation. It functions in the pathway glycolipid metabolism. Its activity is regulated as follows. Up-regulated by CLPS in the presence of increasing concentrations of bile salts. Functionally, lipase that primarily hydrolyzes triglycerides and galactosylglycerides. In neonates, may play a major role in pancreatic digestion of dietary fats such as milk fat globules enriched in long-chain triglycerides. Hydrolyzes short-, medium- and long-chain fatty acyls in triglycerides without apparent positional specificity. Can completely deacylate triacylglycerols. When the liver matures and bile salt synthesis increases, likely functions mainly as a galactolipase and monoacylglycerol lipase. Hydrolyzes monogalactosyldiglycerols (MGDG) and digalactosyldiacylglycerols (DGDG) present in a plant-based diet, releasing long-chain polyunsaturated fatty acids. Hydrolyzes medium- and long-chain fatty acyls in galactolipids. May act together with LIPF to hydrolyze partially digested triglycerides. Hydrolyzes long-chain monoglycerides with high efficiency. In cytotoxic T cells, contributes to perforin-dependent cell lysis, but is unlikely to mediate direct cytotoxicity. Also has low phospholipase activity. In neurons, required for the localization of the phospholipid 1-oleoyl-2-palmitoyl-PC (OPPC) to neurite tips through acyl chain remodeling of membrane phospholipids. The resulting OPPC-rich lipid membrane domain recruits the t-SNARE protein STX4 by selectively interacting with the STX4 transmembrane domain and this promotes surface expression of the dopamine transporter SLC6A3/DAT at neurite tips by facilitating fusion of SLC6A3-containing transport vesicles with the plasma membrane. The sequence is that of Pancreatic lipase-related protein 2 (PNLIPRP2) from Sus scrofa (Pig).